We begin with the raw amino-acid sequence, 210 residues long: Large ribosomal subunit protein uL4 (210 aa).

Part of the 50S ribosomal subunit. In terms of processing, the N-terminus is blocked.

Functionally, one of the primary rRNA binding proteins, this protein initially binds near the 5'-end of the 23S rRNA. It is important during the early stages of 50S assembly. It makes multiple contacts with different domains of the 23S rRNA in the assembled 50S subunit and ribosome. Its function is as follows. Forms part of the polypeptide exit tunnel. This protein can be incorporated into E.coli ribosomes in vivo, which resulted in decreased peptidyltransferase (Ptase) activity of the hybrid ribosomes. The hybrid 50S subunits associate less well with 30S subunits to form the ribosome. The chain is Large ribosomal subunit protein uL4 (rplD) from Thermus thermophilus (strain ATCC 27634 / DSM 579 / HB8).